Consider the following 412-residue polypeptide: Tyrosine--tRNA ligase (412 aa).

Tyr-31 is an L-tyrosine binding site. The 'HIGH' region signature appears at 36–45 (PTAPSLHIGH). L-tyrosine-binding residues include Tyr-162 and Gln-166. Residues 222 to 226 (KIGKT) carry the 'KMSKS' region motif. Lys-225 is a binding site for ATP. In terms of domain architecture, S4 RNA-binding spans 345-412 (KRWLDVVVQL…KKKKQVIDLN (68 aa)).

Belongs to the class-I aminoacyl-tRNA synthetase family. TyrS type 1 subfamily. Homodimer.

It is found in the cytoplasm. It catalyses the reaction tRNA(Tyr) + L-tyrosine + ATP = L-tyrosyl-tRNA(Tyr) + AMP + diphosphate + H(+). Its function is as follows. Catalyzes the attachment of tyrosine to tRNA(Tyr) in a two-step reaction: tyrosine is first activated by ATP to form Tyr-AMP and then transferred to the acceptor end of tRNA(Tyr). This is Tyrosine--tRNA ligase from Chlamydia muridarum (strain MoPn / Nigg).